The chain runs to 249 residues: Probable phosphoglycerate mutase (249 aa).

Residues 9-16 (RHGESTWN), 22-23 (TG), Arg-61, 88-91 (ERMY), Lys-99, 115-116 (RR), and 184-185 (GN) contribute to the substrate site. His-10 (tele-phosphohistidine intermediate) is an active-site residue. The Proton donor/acceptor role is filled by Glu-88.

Belongs to the phosphoglycerate mutase family. BPG-dependent PGAM subfamily. As to quaternary structure, homodimer.

It catalyses the reaction (2R)-2-phosphoglycerate = (2R)-3-phosphoglycerate. The catalysed reaction is (2R)-3-phospho-glyceroyl phosphate = (2R)-2,3-bisphosphoglycerate + H(+). In terms of biological role, catalyzes the interconversion of 2-phosphoglycerate and 3-phosphoglycerate. In Dictyostelium discoideum (Social amoeba), this protein is Probable phosphoglycerate mutase (gpmA).